Here is a 167-residue protein sequence, read N- to C-terminus: Phosphopantetheine adenylyltransferase (167 aa).

S11 contributes to the substrate binding site. ATP is bound by residues 11–12 (SF) and H19. The substrate site is built by K43, T76, and R90. ATP contacts are provided by residues 91–93 (GIR), E101, and 126–132 (YDALSST).

Belongs to the bacterial CoaD family. Homohexamer. Mg(2+) is required as a cofactor.

Its subcellular location is the cytoplasm. It catalyses the reaction (R)-4'-phosphopantetheine + ATP + H(+) = 3'-dephospho-CoA + diphosphate. The protein operates within cofactor biosynthesis; coenzyme A biosynthesis; CoA from (R)-pantothenate: step 4/5. Reversibly transfers an adenylyl group from ATP to 4'-phosphopantetheine, yielding dephospho-CoA (dPCoA) and pyrophosphate. The chain is Phosphopantetheine adenylyltransferase from Lacticaseibacillus paracasei (strain ATCC 334 / BCRC 17002 / CCUG 31169 / CIP 107868 / KCTC 3260 / NRRL B-441) (Lactobacillus paracasei).